The chain runs to 552 residues: Glutamine-dependent NAD(+) synthetase (552 aa).

In terms of domain architecture, CN hydrolase spans 5-245; it reads FRITLAQLNP…EAVVHVDLER (241 aa). E45 serves as the catalytic Proton acceptor; for glutaminase activity. The For glutaminase activity role is filled by K113. C149 functions as the Nucleophile; for glutaminase activity in the catalytic mechanism. The L-glutamine site is built by S175 and K181. The tract at residues 275–552 is ligase; the sequence is LQDYLRKSGF…PMVNRWRDQS (278 aa). 290–297 is an ATP binding site; the sequence is GLSGGIDS. N373 lines the deamido-NAD(+) pocket. ATP is bound at residue T397. E402 and K521 together coordinate deamido-NAD(+).

The protein in the C-terminal section; belongs to the NAD synthetase family.

It catalyses the reaction deamido-NAD(+) + L-glutamine + ATP + H2O = L-glutamate + AMP + diphosphate + NAD(+) + H(+). It functions in the pathway cofactor biosynthesis; NAD(+) biosynthesis; NAD(+) from deamido-NAD(+) (L-Gln route): step 1/1. Its function is as follows. Catalyzes the ATP-dependent amidation of deamido-NAD to form NAD. Uses L-glutamine as a nitrogen source. The polypeptide is Glutamine-dependent NAD(+) synthetase (Rhodobacter capsulatus (Rhodopseudomonas capsulata)).